The primary structure comprises 337 residues: Glyceraldehyde-3-phosphate dehydrogenase (337 aa).

NAD(+) contacts are provided by residues 13–14, D35, and R80; that span reads RI. Residues 150–152, T181, 210–211, and R233 contribute to the D-glyceraldehyde 3-phosphate site; these read SCT and TG. C151 (nucleophile) is an active-site residue. N315 provides a ligand contact to NAD(+).

It belongs to the glyceraldehyde-3-phosphate dehydrogenase family. In terms of assembly, homotetramer.

It localises to the cytoplasm. The enzyme catalyses D-glyceraldehyde 3-phosphate + phosphate + NAD(+) = (2R)-3-phospho-glyceroyl phosphate + NADH + H(+). It functions in the pathway carbohydrate degradation; glycolysis; pyruvate from D-glyceraldehyde 3-phosphate: step 1/5. The protein is Glyceraldehyde-3-phosphate dehydrogenase (GPDA) of Colletotrichum lindemuthianum (Bean anthracnose fungus).